A 478-amino-acid chain; its full sequence is GDP-fucose protein O-fucosyltransferase 3 (478 aa).

Residues 1–9 (MVRIQRGKL) are Cytoplasmic-facing. A helical; Signal-anchor for type II membrane protein transmembrane segment spans residues 10-30 (LAFCLCVMATVFLLITLQVVV). Residues 31 to 478 (ELGKFEGKKF…QEFWALVFKD (448 aa)) lie on the Lumenal side of the membrane. N110 and N168 each carry an N-linked (GlcNAc...) asparagine glycan. The cysteines at positions 389 and 392 are disulfide-linked.

Belongs to the glycosyltransferase 10 family.

The protein resides in the endoplasmic reticulum membrane. The catalysed reaction is L-threonyl-[protein] + GDP-beta-L-fucose = 3-O-(alpha-L-fucosyl)-L-threonyl-[protein] + GDP + H(+). It carries out the reaction L-seryl-[protein] + GDP-beta-L-fucose = 3-O-(alpha-L-fucosyl)-L-seryl-[protein] + GDP + H(+). The protein operates within protein modification; protein glycosylation. Protein O-fucosyltransferase that specifically catalyzes O-fucosylation of serine or threonine residues in EMI domains of target proteins, such as MMRN1, MMRN2 and EMID1. Attaches fucose through an O-glycosidic linkage. O-fucosylation of EMI domain-containing proteins may be required for facilitating protein folding and secretion. May also show alpha-(1,3)-fucosyltransferase activity toward the innermost N-acetyl glucosamine (GlcNAc) residue in biantennary N-glycan acceptors. However, this was tested with a library of synthetic substrates and this activity is unsure in vivo. May be involved in biosynthesis of Lewis X-carrying biantennary N-glycans that regulate neuron stem cell self-renewal during brain development. This chain is GDP-fucose protein O-fucosyltransferase 3 (FUT10), found in Bos taurus (Bovine).